The following is a 439-amino-acid chain: ATP-dependent protease ATPase subunit HslU (439 aa).

ATP is bound by residues I17, 59-64 (GVGKTE), D251, E317, and R389.

The protein belongs to the ClpX chaperone family. HslU subfamily. As to quaternary structure, a double ring-shaped homohexamer of HslV is capped on each side by a ring-shaped HslU homohexamer. The assembly of the HslU/HslV complex is dependent on binding of ATP.

Its subcellular location is the cytoplasm. Its function is as follows. ATPase subunit of a proteasome-like degradation complex; this subunit has chaperone activity. The binding of ATP and its subsequent hydrolysis by HslU are essential for unfolding of protein substrates subsequently hydrolyzed by HslV. HslU recognizes the N-terminal part of its protein substrates and unfolds these before they are guided to HslV for hydrolysis. The chain is ATP-dependent protease ATPase subunit HslU from Campylobacter jejuni subsp. jejuni serotype O:2 (strain ATCC 700819 / NCTC 11168).